The chain runs to 137 residues: NADH-quinone oxidoreductase subunit A (137 aa).

3 helical membrane-spanning segments follow: residues tryptophan 12–serine 32, leucine 68–valine 88, and glycine 94–tyrosine 114.

Belongs to the complex I subunit 3 family. NDH-1 is composed of 13 different subunits. Subunits NuoA, H, J, K, L, M, N constitute the membrane sector of the complex.

Its subcellular location is the cell inner membrane. It carries out the reaction a quinone + NADH + 5 H(+)(in) = a quinol + NAD(+) + 4 H(+)(out). Its function is as follows. NDH-1 shuttles electrons from NADH, via FMN and iron-sulfur (Fe-S) centers, to quinones in the respiratory chain. The immediate electron acceptor for the enzyme in this species is believed to be ubiquinone. Couples the redox reaction to proton translocation (for every two electrons transferred, four hydrogen ions are translocated across the cytoplasmic membrane), and thus conserves the redox energy in a proton gradient. This Ectopseudomonas mendocina (strain ymp) (Pseudomonas mendocina) protein is NADH-quinone oxidoreductase subunit A.